The primary structure comprises 701 residues: Octapeptide-repeat antigen (701 aa).

13 N-linked (GlcNAc...) asparagine glycosylation sites follow: asparagine 40, asparagine 41, asparagine 76, asparagine 111, asparagine 127, asparagine 139, asparagine 181, asparagine 189, asparagine 311, asparagine 334, asparagine 344, asparagine 477, and asparagine 557. The tract at residues 120–140 (IENEEKSNGSRKSSNKQKYNE) is disordered. The interval 641–701 (LSGSSTGSMN…IKSGSKDHIK (61 aa)) is disordered. A compositionally biased stretch (low complexity) spans 642–655 (SGSSTGSMNNGKSG). 6 repeat units span residues 653 to 660 (KSGSKSDI), 661 to 668 (KGGSKDDI), 669 to 676 (KSGSKDDI), 677 to 684 (KSGSKADI), 685 to 692 (KSGSKDDI), and 693 to 700 (KSGSKDHI). The segment at 653–700 (KSGSKSDIKGGSKDDIKSGSKDDIKSGSKADIKSGSKDDIKSGSKDHI) is 6 X 8 AA approximate tandem repeats. The segment covering 656–701 (SKSDIKGGSKDDIKSGSKDDIKSGSKADIKSGSKDDIKSGSKDHIK) has biased composition (basic and acidic residues).

This sequence belongs to the ATP-dependent AMP-binding enzyme family.

It is found in the parasitophorous vacuole. The sequence is that of Octapeptide-repeat antigen from Plasmodium falciparum (isolate NF7 / Ghana).